The chain runs to 315 residues: Ribosomal protein L11 methyltransferase (315 aa).

Residues threonine 163, glycine 184, aspartate 206, and asparagine 248 each coordinate S-adenosyl-L-methionine.

It belongs to the methyltransferase superfamily. PrmA family.

It localises to the cytoplasm. The enzyme catalyses L-lysyl-[protein] + 3 S-adenosyl-L-methionine = N(6),N(6),N(6)-trimethyl-L-lysyl-[protein] + 3 S-adenosyl-L-homocysteine + 3 H(+). Methylates ribosomal protein L11. This chain is Ribosomal protein L11 methyltransferase, found in Lacticaseibacillus paracasei (strain ATCC 334 / BCRC 17002 / CCUG 31169 / CIP 107868 / KCTC 3260 / NRRL B-441) (Lactobacillus paracasei).